A 225-amino-acid polypeptide reads, in one-letter code: Transcriptional activator protein CUP2 (225 aa).

Residues 1 to 40 (MVVINGVKYACETCIRGHRAAQCTHTDGPLQMIRRKGRPS) constitute a DNA-binding region (copper-fist). The segment at 1-108 (MVVINGVKYA…KSKGGSCHRR (108 aa)) is binds copper and DNA. Residues C11, C14, C23, and H25 each coordinate Zn(2+). The segment at 109-225 (ANDEAAHVNG…QVSSHNSHSQ (117 aa)) is required for transcriptional activation.

The protein resides in the nucleus. Trans-acting regulatory protein that activates transcription of the CUP1 gene (metallothionein) in response to copper ions. Binds to the CUP1 UAS sequence 5'-GCTTCTTTTCCGCTGA-3'. Binds DNA only in presence of copper or silver. Copper seems to alter the conformation of the protein. This chain is Transcriptional activator protein CUP2 (CUP2), found in Saccharomyces cerevisiae (strain ATCC 204508 / S288c) (Baker's yeast).